The following is a 226-amino-acid chain: Chalcone--flavanone isomerase 3 (226 aa).

The substrate site is built by Thr-49, Asn-114, and Ser-191.

It belongs to the chalcone isomerase family.

The catalysed reaction is a chalcone = a flavanone.. Its pathway is secondary metabolite biosynthesis; flavonoid biosynthesis. Functionally, catalyzes the intramolecular cyclization of bicyclic chalcones into tricyclic (S)-flavanones. Responsible for the isomerization of 4,2',4',6'-tetrahydroxychalcone (also termed chalcone) into naringenin. This Glycine max (Soybean) protein is Chalcone--flavanone isomerase 3 (CHI3).